The chain runs to 377 residues: O-phospho-L-seryl-tRNA:Cys-tRNA synthase (377 aa).

Residues 83 to 84, asparagine 188, and 211 to 213 each bind pyridoxal 5'-phosphate; these read AR and SGH. N6-(pyridoxal phosphate)lysine is present on lysine 214.

Belongs to the SepCysS family. As to quaternary structure, homodimer. Interacts with SepRS. The cofactor is pyridoxal 5'-phosphate.

It carries out the reaction O-phospho-L-seryl-tRNA(Cys) + hydrogen sulfide + H(+) = L-cysteinyl-tRNA(Cys) + phosphate. Converts O-phospho-L-seryl-tRNA(Cys) (Sep-tRNA(Cys)) to L-cysteinyl-tRNA(Cys) (Cys-tRNA(Cys)). This Methanothermobacter thermautotrophicus (strain ATCC 29096 / DSM 1053 / JCM 10044 / NBRC 100330 / Delta H) (Methanobacterium thermoautotrophicum) protein is O-phospho-L-seryl-tRNA:Cys-tRNA synthase.